Consider the following 387-residue polypeptide: Alkanesulfonate monooxygenase (387 aa).

The protein belongs to the SsuD family.

The catalysed reaction is an alkanesulfonate + FMNH2 + O2 = an aldehyde + FMN + sulfite + H2O + 2 H(+). Catalyzes the desulfonation of aliphatic sulfonates. In Cupriavidus pinatubonensis (strain JMP 134 / LMG 1197) (Cupriavidus necator (strain JMP 134)), this protein is Alkanesulfonate monooxygenase.